Here is a 315-residue protein sequence, read N- to C-terminus: uncharacterized protein (315 aa).

Coiled coils occupy residues 184 to 212 and 238 to 275; these read AGEEDKKVMEELKEREKQLREDVSKTPEQ and EEHRKKLHDVKKVILQAELEADSLEKTNPEVINQYKEK.

This sequence belongs to the IIV-6 287R family.

This is an uncharacterized protein from Acheta domesticus (House cricket).